A 674-amino-acid chain; its full sequence is Tripartite terminase subunit 3 (674 aa).

The short motif at valine 212–threonine 219 is the Walker A motif element. A Walker B motif motif is present at residues leucine 305–glutamate 310. Residue glutamate 310 is the For ATPase activity of the active site. Residues aspartate 463 and glutamate 534 each act as for nuclease activity in the active site. Positions glycine 580 to lysine 600 are required for interaction with UL56 and DNA packaging. Catalysis depends on aspartate 651, which acts as the For nuclease activity.

It belongs to the herpesviridae TRM3 protein family. Interacts with the terminase subunits TRM1 and TRM2. Interacts with portal protein.

It is found in the host nucleus. In terms of biological role, component of the molecular motor that translocates viral genomic DNA in empty capsid during DNA packaging. Forms a tripartite terminase complex together with TRM1 and TRM2 in the host cytoplasm. Once the complex reaches the host nucleus, it interacts with the capsid portal vertex. This portal forms a ring in which genomic DNA is translocated into the capsid. TRM3 carries an RNase H-like nuclease activity that plays an important role for the cleavage of concatemeric viral DNA into unit length genomes. This chain is Tripartite terminase subunit 3, found in Homo sapiens (Human).